The sequence spans 436 residues: Enolase (436 aa).

Q167 is a binding site for (2R)-2-phosphoglycerate. Catalysis depends on E209, which acts as the Proton donor. The Mg(2+) site is built by D246, E291, and D318. (2R)-2-phosphoglycerate contacts are provided by K343, R372, S373, and K394. The Proton acceptor role is filled by K343.

The protein belongs to the enolase family. In terms of assembly, component of the RNA degradosome, a multiprotein complex involved in RNA processing and mRNA degradation. The cofactor is Mg(2+).

It is found in the cytoplasm. The protein resides in the secreted. The protein localises to the cell surface. The enzyme catalyses (2R)-2-phosphoglycerate = phosphoenolpyruvate + H2O. It functions in the pathway carbohydrate degradation; glycolysis; pyruvate from D-glyceraldehyde 3-phosphate: step 4/5. Functionally, catalyzes the reversible conversion of 2-phosphoglycerate (2-PG) into phosphoenolpyruvate (PEP). It is essential for the degradation of carbohydrates via glycolysis. This is Enolase from Haemophilus influenzae (strain PittGG).